Consider the following 1229-residue polypeptide: DNA-directed RNA polymerase subunit beta (1229 aa).

The interval 1175-1229 is disordered; it reads ESIDEDEQPQGLGAFERGLEEVENGEEDDDKEKFYEDLMDASQEQDESADDDIDE. 2 stretches are compositionally biased toward acidic residues: residues 1195 to 1204 and 1211 to 1229; these read EVENGEEDDD and DLMDASQEQDESADDDIDE.

It belongs to the RNA polymerase beta chain family. In terms of assembly, the RNAP catalytic core consists of 2 alpha, 1 beta, 1 beta' and 1 omega subunit. When a sigma factor is associated with the core the holoenzyme is formed, which can initiate transcription.

It carries out the reaction RNA(n) + a ribonucleoside 5'-triphosphate = RNA(n+1) + diphosphate. Functionally, DNA-dependent RNA polymerase catalyzes the transcription of DNA into RNA using the four ribonucleoside triphosphates as substrates. In Caldicellulosiruptor saccharolyticus (strain ATCC 43494 / DSM 8903 / Tp8T 6331), this protein is DNA-directed RNA polymerase subunit beta.